Reading from the N-terminus, the 496-residue chain is Lysine--tRNA ligase (496 aa).

2 residues coordinate Mg(2+): glutamate 409 and glutamate 416.

The protein belongs to the class-II aminoacyl-tRNA synthetase family. As to quaternary structure, homodimer. Mg(2+) serves as cofactor.

The protein resides in the cytoplasm. The catalysed reaction is tRNA(Lys) + L-lysine + ATP = L-lysyl-tRNA(Lys) + AMP + diphosphate. This chain is Lysine--tRNA ligase, found in Streptococcus pneumoniae serotype 4 (strain ATCC BAA-334 / TIGR4).